The primary structure comprises 1807 residues: Vitellogenin-A2 (1807 aa).

Residues 1–15 form the signal peptide; it reads MKGIVLALLLALAGS. The Vitellogenin domain occupies 24 to 664; that stretch reads FSESKISVYN…SANTMFPVFI (641 aa). A disordered region spans residues 953-974; sequence TSAEGASMMEDSSEMGPKKYSA. The N-linked (GlcNAc...) asparagine glycan is linked to asparagine 1094. Residues 1095-1320 are disordered; that stretch reads ETALYRSKQK…SSESSSSSSE (226 aa). Residues 1101-1111 show a composition bias toward basic residues; the sequence is SKQKKKNKIHN. The span at 1112–1123 shows a compositional bias: basic and acidic residues; sequence RRLDAEVVEARK. Low complexity predominate over residues 1126–1163; that stretch reads SSLSSSSSSSSSSSSSSSSSSSSSSSSSPSSSSSSSYS. A compositionally biased stretch (basic and acidic residues) spans 1187 to 1198; it reads QNKKRNLQENRK. The segment covering 1205-1232 has biased composition (low complexity); it reads SSSSSSSSSSSSSSSSSSSSSSSSSSSS. The segment covering 1233–1247 has biased composition (basic and acidic residues); the sequence is EENRPHKNRQHDNKQ. 2 stretches are compositionally biased toward low complexity: residues 1263-1276 and 1309-1320; these read SESSSSSSSSSSSE and SSSSESSSSSSE. In terms of domain architecture, VWFD spans 1536–1714; the sequence is GECKVAQDQI…SWILPAESCS (179 aa). Intrachain disulfides connect cysteine 1538–cysteine 1677 and cysteine 1561–cysteine 1713.

In terms of tissue distribution, produced by the liver, secreted into the blood and then sequestered by receptor mediated endocytosis into growing oocytes, where it is generally cleaved, giving rise to the respective yolk components.

Precursor of the major egg-yolk proteins that are sources of nutrients during early development of oviparous organisms. The protein is Vitellogenin-A2 of Xenopus laevis (African clawed frog).